We begin with the raw amino-acid sequence, 553 residues long: Glutamyl-tRNA(Gln) amidotransferase subunit B, mitochondrial (553 aa).

The N-terminal 18 residues, 1 to 18, are a transit peptide targeting the mitochondrion; it reads MAASTSGYSGVLFRLRKY.

This sequence belongs to the GatB/GatE family. GatB subfamily. As to quaternary structure, subunit of the heterotrimeric GatCAB amidotransferase (AdT) complex, composed of A (qrsl1), B (gatb) and C (gatc) subunits.

The protein resides in the mitochondrion. The catalysed reaction is L-glutamyl-tRNA(Gln) + L-glutamine + ATP + H2O = L-glutaminyl-tRNA(Gln) + L-glutamate + ADP + phosphate + H(+). Allows the formation of correctly charged Gln-tRNA(Gln) through the transamidation of misacylated Glu-tRNA(Gln) in the mitochondria. The reaction takes place in the presence of glutamine and ATP through an activated gamma-phospho-Glu-tRNA(Gln). The chain is Glutamyl-tRNA(Gln) amidotransferase subunit B, mitochondrial from Danio rerio (Zebrafish).